The primary structure comprises 474 residues: tRNA-2-methylthio-N(6)-dimethylallyladenosine synthase (474 aa).

An MTTase N-terminal domain is found at Lys3–Arg120. Positions 12, 49, 83, 157, 161, and 164 each coordinate [4Fe-4S] cluster. The region spanning Arg143–Arg375 is the Radical SAM core domain. Residues Arg378–Arg441 form the TRAM domain.

This sequence belongs to the methylthiotransferase family. MiaB subfamily. As to quaternary structure, monomer. [4Fe-4S] cluster serves as cofactor.

The protein resides in the cytoplasm. It catalyses the reaction N(6)-dimethylallyladenosine(37) in tRNA + (sulfur carrier)-SH + AH2 + 2 S-adenosyl-L-methionine = 2-methylsulfanyl-N(6)-dimethylallyladenosine(37) in tRNA + (sulfur carrier)-H + 5'-deoxyadenosine + L-methionine + A + S-adenosyl-L-homocysteine + 2 H(+). Catalyzes the methylthiolation of N6-(dimethylallyl)adenosine (i(6)A), leading to the formation of 2-methylthio-N6-(dimethylallyl)adenosine (ms(2)i(6)A) at position 37 in tRNAs that read codons beginning with uridine. This chain is tRNA-2-methylthio-N(6)-dimethylallyladenosine synthase, found in Shewanella frigidimarina (strain NCIMB 400).